Consider the following 118-residue polypeptide: Large ribosomal subunit protein bL20 (118 aa).

It belongs to the bacterial ribosomal protein bL20 family.

Binds directly to 23S ribosomal RNA and is necessary for the in vitro assembly process of the 50S ribosomal subunit. It is not involved in the protein synthesizing functions of that subunit. In Tolumonas auensis (strain DSM 9187 / NBRC 110442 / TA 4), this protein is Large ribosomal subunit protein bL20.